Here is an 86-residue protein sequence, read N- to C-terminus: U-myrmeciitoxin(01)-Mg1a (86 aa).

The signal sequence occupies residues 1-26; that stretch reads MKLLYLLLTLAIIFVLTIVHAPNVEA. Residues 27 to 52 constitute a propeptide that is removed on maturation; the sequence is KALADPESDAVGFADAFGDADAEATG. At L85 the chain carries Leucine amide.

It belongs to the formicidae venom precursor-01 superfamily. As to expression, expressed by the venom gland. This toxin is detected along the entire venom gland, as well as in the venom reservoir, the venom duct and in the venom. No toxin are detected in the Dufour's gland.

Its subcellular location is the secreted. It is found in the target cell membrane. Toxin that may interact with target cell membranes, producing a concentration-dependent leak in ion conductance, possibly via multimeric pore formation. It produces an immediate sharp increase of calcium concentration in all DRG neurons. This influx in calcium stabilizes without resulting in any observable dye leakage, showing that the effect is not simply cytolytic. This toxin may be one of the major contributors to the pain associated with envenomation. The toxin also displays a weak cytotoxicity (on HEK cells) and some antimicrobial activity (MIC=2.5 uM on C.neoformans (var. grubii), MIC=10.2 uM on S.aureus), but is not hemolytic to human erythtrocytes. In vivo, intraplantar injection into mice causes spontaneous nocifensive behavior (licking, flinching, or shaking of the paw), which lasts 5-7 minutes (10 and 100 uM tested). Mechanical and heat hypoalgesia are observed at 20 and 25 minutes after injection (highest dose tested of 100 uM). In vivo, injection into crickets (A.domesticus) causes an immediate, dose-dependent, reversible and nonlethal incapacitation that lasts about 53 minutes at the highest dose tested (60 ug/g). The polypeptide is U-myrmeciitoxin(01)-Mg1a (Myrmecia gulosa (Red bulldog ant)).